Here is a 487-residue protein sequence, read N- to C-terminus: Probable cobyric acid synthase (487 aa).

The region spanning 249 to 435 is the GATase cobBQ-type domain; sequence DVDIAVVRFP…LHGIFNNASF (187 aa). The active-site Nucleophile is the cysteine 328. Histidine 427 is a catalytic residue.

Belongs to the CobB/CobQ family. CobQ subfamily.

The protein operates within cofactor biosynthesis; adenosylcobalamin biosynthesis. Functionally, catalyzes amidations at positions B, D, E, and G on adenosylcobyrinic A,C-diamide. NH(2) groups are provided by glutamine, and one molecule of ATP is hydrogenolyzed for each amidation. The protein is Probable cobyric acid synthase of Methanocella arvoryzae (strain DSM 22066 / NBRC 105507 / MRE50).